A 442-amino-acid chain; its full sequence is GTPase Der (442 aa).

2 EngA-type G domains span residues 3–167 (PTIV…PPDV) and 177–350 (PRIA…AAAM). GTP is bound by residues 9 to 16 (GRPNVGKS), 56 to 60 (DTAGF), 119 to 122 (NKSE), 183 to 190 (GRPNVGKS), 230 to 234 (DTAGL), and 295 to 298 (NKWD). The KH-like domain occupies 351 to 435 (VNLSTPRLTR…PLRIQFRTAH (85 aa)).

Belongs to the TRAFAC class TrmE-Era-EngA-EngB-Septin-like GTPase superfamily. EngA (Der) GTPase family. Associates with the 50S ribosomal subunit.

Functionally, GTPase that plays an essential role in the late steps of ribosome biogenesis. This is GTPase Der from Aromatoleum aromaticum (strain DSM 19018 / LMG 30748 / EbN1) (Azoarcus sp. (strain EbN1)).